Here is a 249-residue protein sequence, read N- to C-terminus: Photosystem I-associated linker protein CpcL (249 aa).

Residues 11–189 (VSQNQRVTNY…PRYGADHREK (179 aa)) form the PBS-linker domain. Residues 223 to 247 (VVLYVGGALVSLGIIAVALSAWGII) traverse the membrane as a helical segment.

It belongs to the phycobilisome linker protein family. In terms of assembly, part of a specialized phycobilisome (PBS), a structure that is usually composed of two distinct substructures: a core complex and a number of rods radiating from the core. This protein is part of a core-less PBS rod (called CpcL-PBS) with on average 5 stacked phycocyanin hexamers (PC, CpcA and CpcB). Linker CpcL connects the PC stack to the thylakoid, the hexamers are linked by 1 copy of CpcC1, 3 copies of CpcC2 and the stack is terminated by a single copy of CpcD. Ferredoxin--NADP reductase (petH) is also part of the complex. CpcL-PBS has no central core proteins (allophycocyanin ApcA, ApcB) nor phycobiliprotein ApcE.

The protein localises to the cellular thylakoid membrane. Rod linker protein, associated with phycocyanin. Linker polypeptides determine the state of aggregation and the location of the disk-shaped phycobiliprotein units within the phycobilisome and modulate their spectroscopic properties in order to mediate a directed and optimal energy transfer. Plays a role in energy transfer from the phycobilisome to photosystem I (PSI). Although able to transfer energy to both photosystems, this is predominantly a PSI antenna. The protein is Photosystem I-associated linker protein CpcL of Synechocystis sp. (strain ATCC 27184 / PCC 6803 / Kazusa).